Reading from the N-terminus, the 825-residue chain is MASSHQGNGTVPNSQTDAPPDSSTKRRWRRNRIACDSCHARRVRCDRQFPCSRCLRSEITCEFTRERRKRGRIARSKLAEMAKNKMETSETPAPAKTMNGIPAPAGTEIPGHVSPASTFHHRSPPANAPTVSAPSVDGRRSQTDPQLPVRRPEIGGNVTEEWLAGTHVSPGSYEFLNGPAFGEGLGPFPHMFDVWNGVDLAAYSAGTSQGSKATNAPSTSTAPLKYPVLQPLMPFVEATLPRKLVFDLLDLYFTSAFSTHMHPVSFLSKDAPRPSSPALLSSMLWVAALDDRAFSLPISPPQRKRICQFLCALTIRLLRPLIHVSFKDQGGAAAAVAAAAAAATNNPAFAGVGQDLPPTTVHHPFEGGGDDRGLVGPAGSLDDVITYIHVASIISSSEQKAASMRWWHAAFTLARELKLNQEIEVMPNGDSQVEGSSPPFGYSLPGWDGADPGPVFNYSNPTRSSLNCVCDRQDQNTITEEHREERRRTWWLLYIMDRHLALCYNRPLALLDAESEDLLLPLDEASWQSGIIHSNSPKSDGPQCLLSADKNKRRLFPNFICHDHSVFGFFLPLMTITGELIDLNQARNHPMLGMRLNGKDAWNVHVSEVLRQLEIYKASLTTFAATTSDPEAPLSAYAHAQSEHLPAEPSLSQAYAWHTQTVISYASYLVHVLHILLVGKWDPVSLIEDKDFWTSSPAFASTISHALDAADSVDQILRYDPDISFMPYFFGIQLLQGSFLLLLIVERLQKEAGEGILNACEVMIRATESCVVTLNTEYQRNFRQVMRSAVAQARGRPVNHSEIRHRRKAVLALYRWTRKGTGLAL.

Polar residues predominate over residues 1 to 17 (MASSHQGNGTVPNSQTD). The disordered stretch occupies residues 1-28 (MASSHQGNGTVPNSQTDAPPDSSTKRRW). A DNA-binding region (zn(2)-C6 fungal-type) is located at residues 35–61 (CDSCHARRVRCDRQFPCSRCLRSEITC). The tract at residues 117-152 (STFHHRSPPANAPTVSAPSVDGRRSQTDPQLPVRRP) is disordered.

This sequence belongs to the xlnR/xlr1 family. araR subfamily.

It is found in the nucleus. In terms of biological role, transcriptional activator of the arabinanolytic system. Involved in the regulation of extracellular arabinanolytic genes and in the regulation of the intracellular activities of L-arabinose catabolic genes in the pentose catabolic pathway (PCP) in response to the presence of L-arabinose. The chain is Arabinolytic transcriptional activator araR from Emericella nidulans (strain FGSC A4 / ATCC 38163 / CBS 112.46 / NRRL 194 / M139) (Aspergillus nidulans).